The sequence spans 141 residues: Hemoglobin subunit alpha (141 aa).

The disordered stretch occupies residues 1–22; sequence VLSEDDKNRVRTSVGKNPELPG. A Globin domain is found at 1 to 141; that stretch reads VLSEDDKNRV…VSEVLESKYR (141 aa). H58 contributes to the O2 binding site. H87 contributes to the heme b binding site.

It belongs to the globin family. As to quaternary structure, heterotetramer of two alpha chains and two beta chains. As to expression, red blood cells.

Functionally, involved in oxygen transport from the lung to the various peripheral tissues. This chain is Hemoglobin subunit alpha (HBA), found in Vipera aspis (Aspic viper).